Reading from the N-terminus, the 322-residue chain is DNA primase small subunit PriS (322 aa).

Residues Asp-86, Asp-88, and Asp-226 contribute to the active site.

This sequence belongs to the eukaryotic-type primase small subunit family. Heterodimer of a small subunit (PriS) and a large subunit (PriL). It depends on Mg(2+) as a cofactor. Requires Mn(2+) as cofactor.

In terms of biological role, catalytic subunit of DNA primase, an RNA polymerase that catalyzes the synthesis of short RNA molecules used as primers for DNA polymerase during DNA replication. The small subunit contains the primase catalytic core and has DNA synthesis activity on its own. Binding to the large subunit stabilizes and modulates the activity, increasing the rate of DNA synthesis while decreasing the length of the DNA fragments, and conferring RNA synthesis capability. The DNA polymerase activity may enable DNA primase to also catalyze primer extension after primer synthesis. May also play a role in DNA repair. The protein is DNA primase small subunit PriS of Thermoplasma acidophilum (strain ATCC 25905 / DSM 1728 / JCM 9062 / NBRC 15155 / AMRC-C165).